Consider the following 317-residue polypeptide: Methionyl-tRNA formyltransferase (317 aa).

113–116 contributes to the (6S)-5,6,7,8-tetrahydrofolate binding site; the sequence is SLLP.

This sequence belongs to the Fmt family.

It catalyses the reaction L-methionyl-tRNA(fMet) + (6R)-10-formyltetrahydrofolate = N-formyl-L-methionyl-tRNA(fMet) + (6S)-5,6,7,8-tetrahydrofolate + H(+). Its function is as follows. Attaches a formyl group to the free amino group of methionyl-tRNA(fMet). The formyl group appears to play a dual role in the initiator identity of N-formylmethionyl-tRNA by promoting its recognition by IF2 and preventing the misappropriation of this tRNA by the elongation apparatus. The protein is Methionyl-tRNA formyltransferase of Pseudomonas fluorescens (strain SBW25).